A 241-amino-acid polypeptide reads, in one-letter code: MGQKVSPNVLRLGIVRDWEDTWYAEKDQYVKWLDQDIKIREGVLKLLKDAAVSKIKIERTNSNITLIIRTARPAIVLGQEGKNVSNIATAVQKIAKDRNLKVEVKVIEVKNPDADATLVARWIGEQITNRASFRTVQKLAIRKALKAGVKGIKTSVSGRLGGVEMARTEGYIEGSVPLSTLRADIDYALYEAPTTYGQIGVKVWINHGEVIGGQSQRVSEKAPMNNDRRFNNKNNNRGGRK.

A KH type-2 domain is found at 39-108 (IREGVLKLLK…NLKVEVKVIE (70 aa)). Positions 215–241 (SQRVSEKAPMNNDRRFNNKNNNRGGRK) are disordered. Residues 232–241 (NKNNNRGGRK) are compositionally biased toward low complexity.

It belongs to the universal ribosomal protein uS3 family. In terms of assembly, part of the 30S ribosomal subunit. Forms a tight complex with proteins S10 and S14.

Binds the lower part of the 30S subunit head. Binds mRNA in the 70S ribosome, positioning it for translation. The protein is Small ribosomal subunit protein uS3 of Mesoplasma florum (strain ATCC 33453 / NBRC 100688 / NCTC 11704 / L1) (Acholeplasma florum).